We begin with the raw amino-acid sequence, 357 residues long: Dual-specificity RNA methyltransferase RlmN (357 aa).

Glu-89 functions as the Proton acceptor in the catalytic mechanism. The Radical SAM core domain occupies Glu-109–Asp-340. Cys-116 and Cys-345 form a disulfide bridge. [4Fe-4S] cluster is bound by residues Cys-123, Cys-127, and Cys-130. Residues Gly-173–Glu-174, Ser-203, Ser-226–His-228, and Asn-302 each bind S-adenosyl-L-methionine. Cys-345 (S-methylcysteine intermediate) is an active-site residue.

This sequence belongs to the radical SAM superfamily. RlmN family. [4Fe-4S] cluster is required as a cofactor.

The protein localises to the cytoplasm. The enzyme catalyses adenosine(2503) in 23S rRNA + 2 reduced [2Fe-2S]-[ferredoxin] + 2 S-adenosyl-L-methionine = 2-methyladenosine(2503) in 23S rRNA + 5'-deoxyadenosine + L-methionine + 2 oxidized [2Fe-2S]-[ferredoxin] + S-adenosyl-L-homocysteine. The catalysed reaction is adenosine(37) in tRNA + 2 reduced [2Fe-2S]-[ferredoxin] + 2 S-adenosyl-L-methionine = 2-methyladenosine(37) in tRNA + 5'-deoxyadenosine + L-methionine + 2 oxidized [2Fe-2S]-[ferredoxin] + S-adenosyl-L-homocysteine. Its function is as follows. Specifically methylates position 2 of adenine 2503 in 23S rRNA and position 2 of adenine 37 in tRNAs. m2A2503 modification seems to play a crucial role in the proofreading step occurring at the peptidyl transferase center and thus would serve to optimize ribosomal fidelity. The polypeptide is Dual-specificity RNA methyltransferase RlmN (Helicobacter pylori (strain J99 / ATCC 700824) (Campylobacter pylori J99)).